A 240-amino-acid polypeptide reads, in one-letter code: Zein-alpha 19C2 (240 aa).

A signal peptide spans 1–21 (MATKIFSLLMLLALSTCVANA).

The protein belongs to the zein family. Interacts with OP10 (via N-terminus).

In terms of biological role, zeins are major seed storage proteins. This is Zein-alpha 19C2 from Zea mays (Maize).